We begin with the raw amino-acid sequence, 249 residues long: MERLLIVNADDFGLSKGQNYGIIEACRNGIVTSTTALVNGQAIDHAVQLSRDEPSLAIGMHFVLTMGKPLTAMPGLTRDGVLGKWIWQLAEEDALPLEEITQELASQYLRFIELFGRKPTHLDSHHHVHMFPQIFPIVARFAAEEGIALRADRQMVFDLPVNLRTTQGFSSAFYGEEISESLFLQVLDDSSHRGERSLEVMCHPAFIDNTIRQSAYCFPRLTELDVLTSASLKYAIAERGYRLGSYLDV.

Positions 61 and 125 each coordinate Mg(2+).

It belongs to the YdjC deacetylase family. ChbG subfamily. As to quaternary structure, homodimer. The cofactor is Mg(2+).

The protein resides in the cytoplasm. The enzyme catalyses N,N'-diacetylchitobiose + H2O = N-acetyl-beta-D-glucosaminyl-(1-&gt;4)-D-glucosamine + acetate. It carries out the reaction diacetylchitobiose-6'-phosphate + H2O = N'-monoacetylchitobiose-6'-phosphate + acetate. Its pathway is glycan degradation; chitin degradation. Functionally, involved in the degradation of chitin. ChbG is essential for growth on the acetylated chitooligosaccharides chitobiose and chitotriose but is dispensable for growth on cellobiose and chitosan dimer, the deacetylated form of chitobiose. Deacetylation of chitobiose-6-P and chitotriose-6-P is necessary for both the activation of the chb promoter by the regulatory protein ChbR and the hydrolysis of phosphorylated beta-glucosides by the phospho-beta-glucosidase ChbF. Catalyzes the removal of only one acetyl group from chitobiose-6-P to yield monoacetylchitobiose-6-P, the inducer of ChbR and the substrate of ChbF. The polypeptide is Chitooligosaccharide deacetylase (Escherichia coli O7:K1 (strain IAI39 / ExPEC)).